The primary structure comprises 405 residues: Potassium channel subfamily K member 18 (405 aa).

The chain crosses the membrane as a helical span at residues 43 to 63 (LPGLCFLCCLVTYALVGAALF). N94 carries N-linked (GlcNAc...) asparagine glycosylation. The segment at residues 125-151 (FLSALFFCCTVFSTVGYGHMYPVTRLG) is an intramembrane region (pore-forming). 4 residues coordinate K(+): T138, V139, G140, and Y141. Residues 138–143 (TVGYGH) are selectivity filter 1. The chain crosses the membrane as a helical span at residues 153–173 (FLCMLYALFGIPLMFLVLTDI). An interaction with calcineurin region spans residues 221 to 226 (PQIVID). The tract at residues 272–277 (RSNSCP) is interaction with YWHAH. Phosphoserine is present on residues S275 and S287. Residues 304 to 324 (IPLPVIALVIFAYISCAAAIL) form a helical membrane-spanning segment. The segment at residues 337–351 (FYFCFVTLTTIGFGD) is an intramembrane region (pore-forming). Residues 346–351 (TIGFGD) are selectivity filter 2. A helical transmembrane segment spans residues 358–378 (HFFLFFSIYIIVGMEILFIAF).

The protein belongs to the two pore domain potassium channel (TC 1.A.1.8) family. Homodimer. Heterodimer with KCNK2. Heterodimer with KCNK10. Interacts with calcineurin. Interacts with YWHAH, in a phosphorylation-dependent manner. Post-translationally, phosphorylation of Ser-275 is required for the binding of 14-3-3eta/YWHAH. Calcineurin-mediated dephosphorylation of Ser-287 enhances channel activity. In terms of processing, N-glycosylated.

The protein resides in the cell membrane. It catalyses the reaction K(+)(in) = K(+)(out). Activated by volatile anesthetics, such as isoflurane and inhibited by local anesthetics such as bupivacaine and lidocaine. Inhibited by extracellular acidic pH. Inhibited by Zn(2+) ions. In terms of biological role, k(+) channel that conducts outward and inward rectifying currents at depolarized and hyperpolarized membrane potentials, respectively. The outward rectifying currents are voltage-dependent, coupled to K(+) electrochemical gradient across the membrane, whereas the inward currents can be induced in response to activation of Ca(2+)-mobilizing receptors. Homo- and heterodimerizes to form functional channels with distinct regulatory and gating properties. In trigeminal ganglia sensory neurons, the heterodimers of KCNK18/TRESK and KCNK2/TREK-1 or KCNK10/TREK-2 inhibit neuronal firing and neurogenic inflammation by stabilizing the resting membrane potential at K(+) equilibrium potential as well as by regulating the threshold of action potentials and the spike frequency. In thymocytes, conducts K(+) currents upon T cell receptor (TCR) signaling leading to sustained Ca(2+) influx and NF-kappa-B activation, FOXP3 transcription and positive selection of regulatory T cell (Treg) progenitor subsets. Appears to mediate the analgesics effects of hydroxy-alpha-sanshool, a metabolite naturally present in Schezuan pepper and other Xanthoxylum plants. This Rattus norvegicus (Rat) protein is Potassium channel subfamily K member 18 (Kcnk18).